Reading from the N-terminus, the 49-residue chain is Small ribosomal subunit protein uS14B (49 aa).

It belongs to the universal ribosomal protein uS14 family. Zinc-binding uS14 subfamily. As to quaternary structure, part of the 30S ribosomal subunit.

In terms of biological role, binds 16S rRNA, required for the assembly of 30S particles. The chain is Small ribosomal subunit protein uS14B from Natronomonas pharaonis (strain ATCC 35678 / DSM 2160 / CIP 103997 / JCM 8858 / NBRC 14720 / NCIMB 2260 / Gabara) (Halobacterium pharaonis).